Here is a 205-residue protein sequence, read N- to C-terminus: Holliday junction branch migration complex subunit RuvA (205 aa).

Residues 1-64 (MIGRLRGVLI…EDAQLLYGFI (64 aa)) are domain I. The domain II stretch occupies residues 65–143 (TKQERSLFRL…SLMEASVGSE (79 aa)). Residues 144 to 156 (REFVLQSNYSPAP) form a flexible linker region. Positions 157-205 (TVNSAEEDAISALISLGYKPPQASKAVSAAYKEGMDSETLIKAALKSML) are domain III.

The protein belongs to the RuvA family. As to quaternary structure, homotetramer. Forms an RuvA(8)-RuvB(12)-Holliday junction (HJ) complex. HJ DNA is sandwiched between 2 RuvA tetramers; dsDNA enters through RuvA and exits via RuvB. An RuvB hexamer assembles on each DNA strand where it exits the tetramer. Each RuvB hexamer is contacted by two RuvA subunits (via domain III) on 2 adjacent RuvB subunits; this complex drives branch migration. In the full resolvosome a probable DNA-RuvA(4)-RuvB(12)-RuvC(2) complex forms which resolves the HJ.

The protein resides in the cytoplasm. In terms of biological role, the RuvA-RuvB-RuvC complex processes Holliday junction (HJ) DNA during genetic recombination and DNA repair, while the RuvA-RuvB complex plays an important role in the rescue of blocked DNA replication forks via replication fork reversal (RFR). RuvA specifically binds to HJ cruciform DNA, conferring on it an open structure. The RuvB hexamer acts as an ATP-dependent pump, pulling dsDNA into and through the RuvAB complex. HJ branch migration allows RuvC to scan DNA until it finds its consensus sequence, where it cleaves and resolves the cruciform DNA. This chain is Holliday junction branch migration complex subunit RuvA, found in Shewanella sp. (strain MR-7).